Here is a 656-residue protein sequence, read N- to C-terminus: ATP-dependent zinc metalloprotease FtsH (656 aa).

Topologically, residues Met-1–Ser-10 are cytoplasmic. A helical transmembrane segment spans residues Phe-11 to Gly-31. The Extracellular portion of the chain corresponds to Ala-32–Gly-116. The chain crosses the membrane as a helical span at residues Leu-117–Phe-137. Residues Met-138 to Ala-656 lie on the Cytoplasmic side of the membrane. An ATP-binding site is contributed by Gly-209–Thr-216. His-432 provides a ligand contact to Zn(2+). Glu-433 is a catalytic residue. Residues His-436 and Asp-511 each contribute to the Zn(2+) site. Positions Phe-622–Gly-632 are enriched in polar residues. The interval Phe-622–Ala-656 is disordered.

This sequence in the central section; belongs to the AAA ATPase family. The protein in the C-terminal section; belongs to the peptidase M41 family. As to quaternary structure, homohexamer. It depends on Zn(2+) as a cofactor.

The protein localises to the cell membrane. Functionally, acts as a processive, ATP-dependent zinc metallopeptidase for both cytoplasmic and membrane proteins. Plays a role in the quality control of integral membrane proteins. The polypeptide is ATP-dependent zinc metalloprotease FtsH (Chloroflexus aggregans (strain MD-66 / DSM 9485)).